Consider the following 649-residue polypeptide: MDVKTYPVLEAAKNRTLLDNETYLKWYQESVADPETFWGEHGKRIDWFEPYTKVKNTTFEGDVSIKWFEDGLTNVSYNCIDRHLKAHGDKTAIIWEGDNPYLDKKITYNELYDTVCRLANVLKKHGVKKGDRVTIYMPMIPEAAYAMLACTRIGAVHSVVFGGFSPEALAGRIVDCESTFVITCDEGVRGGKPVALKENTDTAVGIAAKQNVTVGKVLVVRRTGGKVGWAPERDLWYHQETAAVEPHCPPERMNAEDPLFILYTSGSTGKPKGVLHTTGGYLVYASMTHQYVFDYQDGDIYWCTADVGWVTGHSYIVYGPLANAATTLMFEGVPNFPDAGRFWEVVDKHKVNIFYTAPTAIRSLMGAGDDFVKRSSRSSLRLLGTVGEPINPEAWEWYYHVVGDERCPVVDTWWQTETGGILITPLPGATDLKPGSATRPFFGVQPQIVDGEGNVVEGAADGNLCIIDSWPGQMRTVYGDHERFIQTYFSTYKGKYFTGDGCRRDEDGYYWITGRVDDVLNVSGHRLGTAEVESALVSHQLVSEAAVVGYPHSIKGQGIYCYVSLMAGEVGNDELRQALVKHVRSEIGPIATPDKIQFAPGLPKTRSGKIMRRILRKIAEDDFGSLGDTSTLADPSVVDDLIANRQNRA.

Residues 189–192, T311, and N335 contribute to the CoA site; that span reads RGGK. ATP contacts are provided by residues 387 to 389, 411 to 416, D500, and R515; these read GEP and DTWWQT. Residue S523 participates in CoA binding. An ATP-binding site is contributed by R526. The Mg(2+) site is built by V537, H539, and V542. R584 contributes to the CoA binding site. The residue at position 609 (K609) is an N6-acetyllysine.

It belongs to the ATP-dependent AMP-binding enzyme family. The cofactor is Mg(2+). In terms of processing, acetylated. Deacetylation by the SIR2-homolog deacetylase activates the enzyme.

The enzyme catalyses acetate + ATP + CoA = acetyl-CoA + AMP + diphosphate. In terms of biological role, catalyzes the conversion of acetate into acetyl-CoA (AcCoA), an essential intermediate at the junction of anabolic and catabolic pathways. AcsA undergoes a two-step reaction. In the first half reaction, AcsA combines acetate with ATP to form acetyl-adenylate (AcAMP) intermediate. In the second half reaction, it can then transfer the acetyl group from AcAMP to the sulfhydryl group of CoA, forming the product AcCoA. The sequence is that of Acetyl-coenzyme A synthetase from Sinorhizobium medicae (strain WSM419) (Ensifer medicae).